Reading from the N-terminus, the 39-residue chain is Decorsin (39 aa).

A high affinity binding domain region spans residues cysteine 27–cysteine 38. Residues arginine 31–aspartate 33 carry the Cell attachment site motif.

The protein belongs to the ornatin family.

The protein localises to the secreted. Functionally, inhibits fibrinogen interaction with platelet receptors expressed on glycoprotein IIb-IIIa complex. May prevent blood from clotting during either feeding and/or storage of ingested blood. This is Decorsin from Macrobdella decora (North American leech).